A 619-amino-acid chain; its full sequence is ATP-dependent zinc metalloprotease FtsH (619 aa).

Over 1–11 (MSNTDPQPPQK) the chain is Cytoplasmic. The chain crosses the membrane as a helical span at residues 12 to 32 (LPLNWVVWTLAVALMLYYLPA). Residues 33 to 120 (MRDRPEPAIK…EVKEGHDASS (88 aa)) lie on the Periplasmic side of the membrane. A helical transmembrane segment spans residues 121–141 (SKVILLSYLPWIMFMIILFWL). At 142–619 (SRRTFRNFSG…IDECLQTGAS (478 aa)) the chain is on the cytoplasmic side. Residue 216 to 223 (GPPGTGKT) coordinates ATP. Residue H437 coordinates Zn(2+). Residue E438 is part of the active site. Zn(2+) is bound by residues H441 and D513.

In the central section; belongs to the AAA ATPase family. It in the C-terminal section; belongs to the peptidase M41 family. In terms of assembly, homohexamer. Requires Zn(2+) as cofactor.

The protein localises to the cell inner membrane. Functionally, acts as a processive, ATP-dependent zinc metallopeptidase for both cytoplasmic and membrane proteins. Plays a role in the quality control of integral membrane proteins. This Hahella chejuensis (strain KCTC 2396) protein is ATP-dependent zinc metalloprotease FtsH.